A 604-amino-acid chain; its full sequence is Sulfite reductase [NADPH] flavoprotein alpha-component (604 aa).

The Flavodoxin-like domain maps to 66-204 (VTVLSASQTG…AADGWTGRIV (139 aa)). FMN-binding positions include 72–77 (SQTGNA), 119–122 (STQG), and 155–164 (LGDSSYPNFC). The tract at residues 212–231 (AKNRATPAPQTTPPAGLQTA) is disordered. Residues 216–231 (ATPAPQTTPPAGLQTA) are compositionally biased toward low complexity. Residues 239 to 453 (ADPFPAALLA…VERNDGFRLP (215 aa)) enclose the FAD-binding FR-type domain. FAD-binding positions include Thr-327, Gln-361, 391-394 (RLYS), 409-411 (TVG), and 424-427 (GGAS). Residues 524–525 (SR), 530–534 (KIYVQ), and Asp-566 contribute to the NADP(+) site. Tyr-604 is an FAD binding site.

This sequence belongs to the NADPH-dependent sulphite reductase flavoprotein subunit CysJ family. In the N-terminal section; belongs to the flavodoxin family. It in the C-terminal section; belongs to the flavoprotein pyridine nucleotide cytochrome reductase family. As to quaternary structure, alpha(8)-beta(8). The alpha component is a flavoprotein, the beta component is a hemoprotein. It depends on FAD as a cofactor. FMN is required as a cofactor.

It catalyses the reaction hydrogen sulfide + 3 NADP(+) + 3 H2O = sulfite + 3 NADPH + 4 H(+). Its pathway is sulfur metabolism; hydrogen sulfide biosynthesis; hydrogen sulfide from sulfite (NADPH route): step 1/1. In terms of biological role, component of the sulfite reductase complex that catalyzes the 6-electron reduction of sulfite to sulfide. This is one of several activities required for the biosynthesis of L-cysteine from sulfate. The flavoprotein component catalyzes the electron flow from NADPH -&gt; FAD -&gt; FMN to the hemoprotein component. The protein is Sulfite reductase [NADPH] flavoprotein alpha-component of Neisseria meningitidis serogroup C / serotype 2a (strain ATCC 700532 / DSM 15464 / FAM18).